We begin with the raw amino-acid sequence, 81 residues long: Photosystem I iron-sulfur center (81 aa).

2 consecutive 4Fe-4S ferredoxin-type domains span residues S2–W31 and I39–Y68. [4Fe-4S] cluster-binding residues include C11, C14, C17, C21, C48, C51, C54, and C58.

In terms of assembly, the cyanobacterial PSI reaction center is composed of one copy each of PsaA,B,C,D,E,F,I,J,K,L,M and X, and forms trimeric complexes. It depends on [4Fe-4S] cluster as a cofactor.

Its subcellular location is the cellular thylakoid membrane. It catalyses the reaction reduced [plastocyanin] + hnu + oxidized [2Fe-2S]-[ferredoxin] = oxidized [plastocyanin] + reduced [2Fe-2S]-[ferredoxin]. Functionally, apoprotein for the two 4Fe-4S centers FA and FB of photosystem I (PSI); essential for photochemical activity. FB is the terminal electron acceptor of PSI, donating electrons to ferredoxin. The C-terminus interacts with PsaA/B/D and helps assemble the protein into the PSI complex. Required for binding of PsaD and PsaE to PSI. PSI is a plastocyanin/cytochrome c6-ferredoxin oxidoreductase, converting photonic excitation into a charge separation, which transfers an electron from the donor P700 chlorophyll pair to the spectroscopically characterized acceptors A0, A1, FX, FA and FB in turn. The sequence is that of Photosystem I iron-sulfur center from Prochlorococcus marinus (strain MIT 9303).